The following is a 1522-amino-acid chain: ATP-binding cassette sub-family C member 3 (1522 aa).

At 1 to 32 (MDRLCGSGELGSKFWDSNLTVYTNTPDLTPCF) the chain is on the extracellular side. A glycan (N-linked (GlcNAc...) asparagine) is linked at Asn18. Residues 33-53 (QNSLLAWVPCIYLWAALPCYL) form a helical membrane-spanning segment. Residues 54–73 (FYLRHHRLGYIVLSCLSRLK) are Cytoplasmic-facing. A helical membrane pass occupies residues 74–94 (TALGVLLWCISWVDLFYSFHG). Over 95–99 (LVHGS) the chain is Extracellular. A helical membrane pass occupies residues 100-120 (SPAPVFFITPLLVGITMLLAT). At 121–132 (LLIQYERLRGVR) the chain is on the cytoplasmic side. A helical membrane pass occupies residues 133-153 (SSGVLIIFWLLCVICAIIPFR). The Extracellular portion of the chain corresponds to 154–171 (SKILLALAEGKILDPFRF). The chain crosses the membrane as a helical span at residues 172-192 (TTFYIYFALVLCAFILSCFQE). The Cytoplasmic portion of the chain corresponds to 193–301 (KPPLFSPENL…KTKKPSFLRA (109 aa)). A helical transmembrane segment spans residues 302-322 (LVRTFTSSLLMGACFKLIQDL). One can recognise an ABC transmembrane type-1 1 domain in the interval 310–592 (LLMGACFKLI…LPQLISGMTQ (283 aa)). Residues 323-347 (SPSSTHSCSASSSGLFRPHGPYWWG) lie on the Extracellular side of the membrane. A helical transmembrane segment spans residues 348-368 (FLLAGLMFVSSTMQTLILHQH). At 369–424 (YHCIFVMALRIRTAIIGVIYRKALTITNSVKREYTVGEMVNLMSVDAQRFMDVSPF) the chain is on the cytoplasmic side. A helical membrane pass occupies residues 425 to 445 (INLLWSAPLQVILAIYFLWQI). Over 446 to 448 (LGP) the chain is Extracellular. Residues 449–469 (SALAGVAVIVLLIPLNGAVSM) form a helical membrane-spanning segment. Over 470 to 531 (KMKTYQVQQM…LLRKGAYLQA (62 aa)) the chain is Cytoplasmic. A helical transmembrane segment spans residues 532–552 (ISTFIWVCTPFMVTLITLGVY). Residues 553–574 (VCVDKNNVLDAEKAFVSLSLFN) lie on the Extracellular side of the membrane. Residues 575 to 595 (ILKIPLNLLPQLISGMTQTSV) form a helical membrane-spanning segment. The Cytoplasmic segment spans residues 596–958 (SLKRIQDFLN…VKLSVYWDYA (363 aa)). The ABC transporter 1 domain occupies 625 to 849 (ITIHNGTFSW…DGSFANFLRN (225 aa)). 659 to 666 (GPVGCGKS) lines the ATP pocket. Phosphoserine is present on residues Ser902 and Ser905. The helical transmembrane segment at 959–979 (KSVGLCTTLFICLLYAGQNAV) threads the bilayer. Positions 966–1247 (TLFICLLYAG…MIRTLSDLES (282 aa)) constitute an ABC transmembrane type-1 2 domain. Over 980–1016 (AIGANVWLSAWTNDVEEHGQQNNTSVRLGVYATLGIL) the chain is Extracellular. N-linked (GlcNAc...) asparagine glycans are attached at residues Asn1001 and Asn1002. A helical transmembrane segment spans residues 1017–1037 (QGLLVMLSAFTMVVGAIQAAR). Topologically, residues 1038–1080 (LLHTALLHNQIRAPQSFFDTTPSGRILNRFSKDIYVIHEVLAP) are cytoplasmic. The helical transmembrane segment at 1081–1101 (TILMLFNSFYTSISTIVVIVA) threads the bilayer. A topological domain (extracellular) is located at residue Ser1102. Residues 1103 to 1123 (TPLFCVVVLPLAVFYGFVQRF) form a helical membrane-spanning segment. Topologically, residues 1124-1194 (YVATSRQLKR…ASNRWLGVHV (71 aa)) are cytoplasmic. The chain crosses the membrane as a helical span at residues 1195–1215 (EFVGNCVVLFSALFAVIGRNS). The Extracellular portion of the chain corresponds to 1216 to 1217 (LN). A helical membrane pass occupies residues 1218-1238 (PGLVGLSVSYALQVTLSLNWM). The Cytoplasmic segment spans residues 1239–1522 (IRTLSDLESN…YGMAKDAGLA (284 aa)). Residues 1286–1518 (FRNYSVRYRP…GGIFYGMAKD (233 aa)) form the ABC transporter 2 domain. ATP is bound at residue 1318 to 1325 (GRTGAGKS).

It belongs to the ABC transporter superfamily. ABCC family. Conjugate transporter (TC 3.A.1.208) subfamily. In terms of tissue distribution, expressed in lung, ileum, colon and liver. Higher in liver of Eisai hyperbilirubinemic rats.

It localises to the basolateral cell membrane. The protein resides in the basal cell membrane. It carries out the reaction an S-substituted glutathione(in) + ATP + H2O = an S-substituted glutathione(out) + ADP + phosphate + H(+). The enzyme catalyses ATP + H2O + xenobioticSide 1 = ADP + phosphate + xenobioticSide 2.. It catalyses the reaction taurocholate(in) + ATP + H2O = taurocholate(out) + ADP + phosphate + H(+). The catalysed reaction is glycocholate(in) + ATP + H2O = glycocholate(out) + ADP + phosphate + H(+). It carries out the reaction taurolithocholate 3-sulfate(in) + ATP + H2O = taurolithocholate 3-sulfate(out) + ADP + phosphate + H(+). The enzyme catalyses 17beta-estradiol 17-O-(beta-D-glucuronate)(in) + ATP + H2O = 17beta-estradiol 17-O-(beta-D-glucuronate)(out) + ADP + phosphate + H(+). It catalyses the reaction dehydroepiandrosterone 3-sulfate(in) + ATP + H2O = dehydroepiandrosterone 3-sulfate(out) + ADP + phosphate + H(+). The catalysed reaction is leukotriene C4(in) + ATP + H2O = leukotriene C4(out) + ADP + phosphate + H(+). It carries out the reaction (4Z,15Z)-bilirubin IXalpha C8-beta-D-glucuronoside(in) + ATP + H2O = (4Z,15Z)-bilirubin IXalpha C8-beta-D-glucuronoside(out) + ADP + phosphate + H(+). The enzyme catalyses (4Z,15Z)-bilirubin IXalpha C8,C12-beta-D-bisglucuronoside(in) + ATP + H2O = (4Z,15Z)-bilirubin IXalpha C8,C12-beta-D-bisglucuronoside(out) + ADP + phosphate + H(+). It catalyses the reaction taurochenodeoxycholate 3-sulfate(in) + ATP + H2O = taurochenodeoxycholate 3-sulfate(out) + ADP + phosphate + H(+). ATP-dependent transporter of the ATP-binding cassette (ABC) family that binds and hydrolyzes ATP to enable active transport of various substrates including many drugs, toxicants and endogenous compound across cell membranes. Transports glucuronide conjugates such as bilirubin diglucuronide, estradiol-17-beta-o-glucuronide and GSH conjugates such as leukotriene C4 (LTC4). Transports also various bile salts (taurocholate, glycocholate, taurochenodeoxycholate-3-sulfate, taurolithocholate- 3-sulfate). Does not contribute substantially to bile salt physiology but provides an alternative route for the export of bile acids and glucuronides from cholestatic hepatocytes. May contribute to regulate the transport of organic compounds in testes across the blood-testis-barrier. In Rattus norvegicus (Rat), this protein is ATP-binding cassette sub-family C member 3 (Abcc3).